A 542-amino-acid chain; its full sequence is MAKDIKFSEDARRAMLRGVDQLANAVKVTLGPKGRNVVLEKKFGSPLITNDGVTIAKEIELEDPFENMGAKLVSEVASKTNDVAGDGTTTATVLAQAMIQEGLKNVTAGANPVGVRRGIEKAVATAIEELKAISKPIESKESIAQVAAISSGDEEVGKLIAEAMERVGNDGVITIEESKGFATELDVVEGMQFDRGYTSPYMVTDSDKMEAVLEKPYILITDKKINNIQEILPVLEQVVQQGRPMLIIAEDVEGEAQATLVLNKLRGTFNVVAVKAPGFGDRRKAMLEDIAILTGGQVITEDLGLELKTATVDQLGTANKVVVTKDDTTIVEGAGDSTQISARVNQIRAQMEETTSEFDREKLQERLAKLAGGVAVVKVGAATETELKERKLRIEDALNSTRAAVEEGIVAGGGTALVSIYNKVAALEAEGDVETGINIVLRSLEEPVRQIAHNAGLEGSVIVERLKHEAVGVGFNAANGEWVNMIDAGIVDPTKVTRSALQNASSVAALLLTTEAVVADKPDENGPAAVPDMGMGGMGGMM.

ATP-binding positions include Thr-29 to Pro-32, Asp-86 to Thr-90, Gly-413, Asn-476 to Ala-478, and Asp-492. A disordered region spans residues Pro-522 to Met-542.

The protein belongs to the chaperonin (HSP60) family. As to quaternary structure, forms a cylinder of 14 subunits composed of two heptameric rings stacked back-to-back. Interacts with the co-chaperonin GroES.

The protein resides in the cytoplasm. The catalysed reaction is ATP + H2O + a folded polypeptide = ADP + phosphate + an unfolded polypeptide.. Its function is as follows. Together with its co-chaperonin GroES, plays an essential role in assisting protein folding. The GroEL-GroES system forms a nano-cage that allows encapsulation of the non-native substrate proteins and provides a physical environment optimized to promote and accelerate protein folding. The sequence is that of Chaperonin GroEL from Listeria monocytogenes serotype 4b (strain CLIP80459).